The primary structure comprises 748 residues: Polyribonucleotide nucleotidyltransferase (748 aa).

2 residues coordinate Mg(2+): D487 and D493. The KH domain maps to 554–613; it reads PSTTTIKIDKDKIRDIIGPGGKVIKEICETSGAKIDISDDGTVSVYASDRDKLKVALDKI. The region spanning 623-691 is the S1 motif domain; sequence GEIFNGTVVK…NKGKAKLTIK (69 aa). Residues 695–733 are disordered; sequence KDKFSNNTKPKTSVNNTKDNSEPEQRHDSSKKRAWNEDN. The segment covering 699-712 has biased composition (polar residues); it reads SNNTKPKTSVNNTK. Residues 713–722 are compositionally biased toward basic and acidic residues; that stretch reads DNSEPEQRHD.

The protein belongs to the polyribonucleotide nucleotidyltransferase family. It depends on Mg(2+) as a cofactor.

It is found in the cytoplasm. It carries out the reaction RNA(n+1) + phosphate = RNA(n) + a ribonucleoside 5'-diphosphate. Functionally, involved in mRNA degradation. Catalyzes the phosphorolysis of single-stranded polyribonucleotides processively in the 3'- to 5'-direction. The chain is Polyribonucleotide nucleotidyltransferase from Rickettsia rickettsii (strain Iowa).